A 143-amino-acid polypeptide reads, in one-letter code: 3-dehydroquinate dehydratase (143 aa).

Tyrosine 22 serves as the catalytic Proton acceptor. Residues asparagine 73, histidine 79, and aspartate 86 each coordinate substrate. Histidine 99 acts as the Proton donor in catalysis. Substrate is bound by residues isoleucine 100–serine 101 and arginine 110.

Belongs to the type-II 3-dehydroquinase family. As to quaternary structure, homododecamer.

The catalysed reaction is 3-dehydroquinate = 3-dehydroshikimate + H2O. It participates in metabolic intermediate biosynthesis; chorismate biosynthesis; chorismate from D-erythrose 4-phosphate and phosphoenolpyruvate: step 3/7. Catalyzes a trans-dehydration via an enolate intermediate. The polypeptide is 3-dehydroquinate dehydratase (Salinispora arenicola (strain CNS-205)).